The chain runs to 221 residues: UPF0502 protein XOO0224 (221 aa).

Belongs to the UPF0502 family.

In Xanthomonas oryzae pv. oryzae (strain MAFF 311018), this protein is UPF0502 protein XOO0224.